Consider the following 257-residue polypeptide: Dof zinc finger protein DOF5.3 (257 aa).

The segment at 23–50 is disordered; it reads LSYSSNPTPLDNDQKKPSPATAVTRPQP. Residues 24–33 are compositionally biased toward polar residues; that stretch reads SYSSNPTPLD. The segment at 55 to 109 adopts a Dof-type zinc-finger fold; the sequence is LRCPRCDSTNTKFCYYNNYSLTQPRYFCKSCRRYWTKGGTLRNIPVGGGCRKNKR. Positions 57, 60, 82, and 85 each coordinate Zn(2+). A disordered region spans residues 104-127; sequence CRKNKRSTSSAARSLRTTPEPASH. The segment covering 110 to 121 has biased composition (low complexity); the sequence is STSSAARSLRTT.

In terms of tissue distribution, the PEAR proteins (e.g. DOF2.4, DOF5.1, DOF3.2, DOF1.1, DOF5.6 and DOF5.3) form a short-range concentration gradient that peaks at protophloem sieve elements (PSE). Accumulates in the stele.

The protein localises to the nucleus. In terms of biological role, transcription factor that binds specifically to a 5'-AA[AG]G-3' consensus core sequence. The PEAR proteins (e.g. DOF2.4, DOF5.1, DOF3.2, DOF1.1, DOF5.6 and DOF5.3) activate gene expression that promotes radial growth of protophloem sieve elements. This chain is Dof zinc finger protein DOF5.3, found in Arabidopsis thaliana (Mouse-ear cress).